Consider the following 437-residue polypeptide: Adenylosuccinate synthetase (437 aa).

GTP is bound by residues Gly-12 to Lys-18 and Gly-40 to Thr-42. The Proton acceptor role is filled by Asp-13. Mg(2+) is bound by residues Asp-13 and Gly-40. IMP contacts are provided by residues Asp-13–Lys-16, Asn-38–His-41, Thr-128, Arg-142, Gln-223, Thr-238, and Arg-302. His-41 serves as the catalytic Proton donor. Residue Thr-298 to Arg-304 participates in substrate binding. Residues Arg-304, Lys-330 to Asp-332, and Ser-412 to Gly-414 each bind GTP.

This sequence belongs to the adenylosuccinate synthetase family. As to quaternary structure, homodimer. Requires Mg(2+) as cofactor.

The protein resides in the cytoplasm. The enzyme catalyses IMP + L-aspartate + GTP = N(6)-(1,2-dicarboxyethyl)-AMP + GDP + phosphate + 2 H(+). The protein operates within purine metabolism; AMP biosynthesis via de novo pathway; AMP from IMP: step 1/2. In terms of biological role, plays an important role in the de novo pathway of purine nucleotide biosynthesis. Catalyzes the first committed step in the biosynthesis of AMP from IMP. The protein is Adenylosuccinate synthetase of Prochlorococcus marinus (strain MIT 9313).